A 178-amino-acid chain; its full sequence is Putative peroxiredoxin in rubredoxin operon (178 aa).

Positions 3–163 constitute a Thioredoxin domain; that stretch reads RLVGKPAPEF…TLRVLKAFQT (161 aa). Cysteine 50 functions as the Cysteine sulfenic acid (-SOH) intermediate in the catalytic mechanism.

This sequence belongs to the peroxiredoxin family. AhpC/Prx1 subfamily. As to quaternary structure, homodimer; disulfide-linked, upon oxidation.

Its subcellular location is the cytoplasm. It carries out the reaction a hydroperoxide + [protein]-dithiol = [protein]-disulfide + an alcohol + H2O. Its function is as follows. Thiol-specific peroxidase that catalyzes the reduction of hydrogen peroxide and organic hydroperoxides to water and alcohols, respectively. Plays a role in cell protection against oxidative stress by detoxifying peroxides. The chain is Putative peroxiredoxin in rubredoxin operon from Clostridium pasteurianum.